The chain runs to 729 residues: Cullin-6 (729 aa).

A Cullin neddylation domain is found at 659–720; sequence DRKYEIKACI…EQLYIRRSEN (62 aa). Residue lysine 673 forms a Glycyl lysine isopeptide (Lys-Gly) (interchain with G-Cter in NEDD8) linkage.

The protein belongs to the cullin family. As to quaternary structure, probably interacts with skr-3. Post-translationally, neddylated; which enhances the ubiquitination activity of SCF-like complex.

Its function is as follows. Probable core component of cullin-based SCF-like E3 ubiquitin-protein ligase complexes which mediate the ubiquitination and subsequent proteasomal degradation of target proteins. The polypeptide is Cullin-6 (cul-6) (Caenorhabditis elegans).